Reading from the N-terminus, the 104-residue chain is uncharacterized protein (104 aa).

2 helical membrane passes run 47–67 (IDHRTWHIVGLCIFGFLLAML) and 72–92 (VGHVEDWFLITFAAVVLFVLA).

It to M.leprae ML1584.

It localises to the cell membrane. This is an uncharacterized protein from Mycobacterium tuberculosis (strain CDC 1551 / Oshkosh).